Here is a 277-residue protein sequence, read N- to C-terminus: 14-3-3 protein (277 aa).

The interval 252-277 is disordered; it reads LQTQEQQQQPVGEGAEAPKVEATEQQ. Residues 267–277 show a composition bias toward basic and acidic residues; sequence EAPKVEATEQQ.

The protein belongs to the 14-3-3 family.

The protein is 14-3-3 protein of Eimeria tenella (Coccidian parasite).